Here is a 250-residue protein sequence, read N- to C-terminus: Heat stress transcription factor C-1b (250 aa).

A coiled-coil region spans residues 129 to 182; that stretch reads EEGEEVRGTIEAVQRLREEQRGMEEELQAMDQRLRAAESRPGQMMAFLAKLADE. The hydrophobic repeat HR-A/B stretch occupies residues 144–180; the sequence is LREEQRGMEEELQAMDQRLRAAESRPGQMMAFLAKLA. Positions 199–226 are disordered; it reads AAGNNGSDPCKRRRIGADTGRGGVATGG. The Nuclear localization signal motif lies at 209 to 212; the sequence is KRRR.

Belongs to the HSF family. Class C subfamily. In terms of assembly, homotrimer. Post-translationally, exhibits temperature-dependent phosphorylation.

The protein localises to the nucleus. In terms of biological role, transcriptional regulator that specifically binds DNA of heat shock promoter elements (HSE). The protein is Heat stress transcription factor C-1b (HSFC1B) of Oryza sativa subsp. japonica (Rice).